We begin with the raw amino-acid sequence, 1079 residues long: Capping protein inhibiting regulator of actin dynamics (1079 aa).

Basic and acidic residues predominate over residues 1–11 (MSQENVSDKVR). Disordered stretches follow at residues 1-293 (MSQE…EEER), 308-327 (ERKR…AEKR), 341-383 (EHRI…EWKR), 420-453 (PVTP…PTLS), 493-522 (EGKK…VFES), 606-639 (IFGQ…VQSR), and 658-1054 (PSFL…TTQV). Residues 36–45 (DEGSSDEEEV) are compositionally biased toward acidic residues. Positions 64-76 (SAKEKSVSHDTVQ) are enriched in basic and acidic residues. The span at 115 to 134 (AKHKLSVKPKNQRVSRKHRR) shows a compositional bias: basic residues. The segment covering 140–158 (HEDDFSEIQEEFEKDEEVF) has biased composition (acidic residues). Residues 159-293 (DSSREDYGII…EERKRAEEER (135 aa)) show a composition bias toward basic and acidic residues. Residues 420–434 (PVTPATGQQGETTAE) are compositionally biased toward polar residues. The span at 670-682 (PKSQRSESGSPIQ) shows a compositional bias: polar residues. A compositionally biased stretch (acidic residues) spans 684 to 695 (ESEDSDTKDEDG). Residues 756–781 (DNSTLSEKSSPISPQQENIEFQTTVA) show a composition bias toward polar residues. 2 stretches are compositionally biased toward basic and acidic residues: residues 896–930 (WREK…DKET) and 944–983 (GFRE…EDKG). Over residues 984-993 (NGSSSIISKH) the composition is skewed to polar residues. Positions 994-1016 (QTADENKRPDTLLARFERRDNLK) are enriched in basic and acidic residues. The segment covering 1020–1033 (TLPSSVTVEITDST) has biased composition (polar residues).

In terms of assembly, directly interacts with actin-capping proteins; this interaction decreases the binding of capping proteins to actin.

It localises to the cytoplasm. It is found in the cytosol. Its function is as follows. Involved in epithelial cell integrity by acting on the maintenance of the actin cytoskeleton. Positively regulates the actin polymerization, by inhibiting the interaction of actin-capping proteins with actin. This Danio rerio (Zebrafish) protein is Capping protein inhibiting regulator of actin dynamics (crad).